We begin with the raw amino-acid sequence, 538 residues long: Diacylglycerol O-acyltransferase 1-1 (538 aa).

2 disordered regions span residues methionine 1 to valine 39 and alanine 54 to arginine 106. Positions glutamate 69–proline 83 are enriched in low complexity. 7 helical membrane passes run alanine 136–valine 156, tryptophan 186–glutamate 206, valine 218–isoleucine 238, valine 245–phenylalanine 265, asparagine 293–tyrosine 313, glycine 326–isoleucine 346, and leucine 382–leucine 402. Positions phenylalanine 409–asparagine 415 match the FYXDWWN motif motif. The next 3 membrane-spanning stretches (helical) occupy residues valine 451–proline 471, isoleucine 474–alanine 494, and valine 505–leucine 525. Histidine 464 is a catalytic residue.

Belongs to the membrane-bound acyltransferase family. Sterol o-acyltransferase subfamily.

The protein localises to the endoplasmic reticulum membrane. The enzyme catalyses an acyl-CoA + a 1,2-diacyl-sn-glycerol = a triacyl-sn-glycerol + CoA. The protein operates within glycerolipid metabolism; triacylglycerol biosynthesis. In terms of biological role, involved in triacylglycerol (TAG) synthesis. Catalyzes the acylation of the sn-3 hydroxy group of sn-1,2-diacylglycerol using acyl-CoA. The sequence is that of Diacylglycerol O-acyltransferase 1-1 from Oryza sativa subsp. japonica (Rice).